The chain runs to 169 residues: uncharacterized protein (169 aa).

Residues 55–77 (SLFIFKAVMILHTCLIVKSIRIF) traverse the membrane as a helical segment.

It is found in the membrane. This is an uncharacterized protein from Saccharomyces cerevisiae (strain ATCC 204508 / S288c) (Baker's yeast).